We begin with the raw amino-acid sequence, 253 residues long: Eukaryotic initiation factor 4A-6 (253 aa).

The region spanning H1–I82 is the Helicase ATP-binding domain. A DEAD box motif is present at residues D30–D33. The Helicase C-terminal domain maps to G93–L253.

It belongs to the DEAD box helicase family. eIF4A subfamily. As to quaternary structure, eIF4F is a multi-subunit complex, the composition of which varies with external and internal environmental conditions. It is composed of at least EIF4A, EIF4E and EIF4G.

The enzyme catalyses ATP + H2O = ADP + phosphate + H(+). Its function is as follows. ATP-dependent RNA helicase which is a subunit of the eIF4F complex involved in cap recognition and is required for mRNA binding to ribosome. In the current model of translation initiation, eIF4A unwinds RNA secondary structures in the 5'-UTR of mRNAs which is necessary to allow efficient binding of the small ribosomal subunit, and subsequent scanning for the initiator codon. In Nicotiana tabacum (Common tobacco), this protein is Eukaryotic initiation factor 4A-6.